The following is a 682-amino-acid chain: Glutamine--fructose-6-phosphate aminotransferase [isomerizing] 2 (682 aa).

The active-site For GATase activity is the Cys2. The Glutamine amidotransferase type-2 domain maps to 2-288; it reads CGIFAYMNYR…DDDIAAVADG (287 aa). Ser244 carries the phosphoserine modification. SIS domains follow at residues 360–499 and 531–672; these read HLKE…DRIS and LALE…VDFP. Substrate is bound by residues 377–378, 422–424, Thr427, and His578; these read TS and SQS.

It carries out the reaction D-fructose 6-phosphate + L-glutamine = D-glucosamine 6-phosphate + L-glutamate. The protein operates within nucleotide-sugar biosynthesis; UDP-N-acetyl-alpha-D-glucosamine biosynthesis; alpha-D-glucosamine 6-phosphate from D-fructose 6-phosphate: step 1/1. Controls the flux of glucose into the hexosamine pathway. Most likely involved in regulating the availability of precursors for N- and O-linked glycosylation of proteins. This is Glutamine--fructose-6-phosphate aminotransferase [isomerizing] 2 (GFPT2) from Bos taurus (Bovine).